The primary structure comprises 79 residues: Protein OPG081 (79 aa).

The Intravirion segment spans residues 1–8 (MVDAITVL). Residues 9 to 29 (TAIGITVLMLLMVISGAAMIV) form a helical membrane-spanning segment. At 30–47 (KELNPNDIFTMQSLKFNR) the chain is on the virion surface side. The helical transmembrane segment at 48-68 (AVTIFKYIGLFIYIPGTIILY) threads the bilayer. Over 69–79 (ATYVKSLLMKS) the chain is Intravirion.

This sequence belongs to the orthopoxvirus OPG081 family.

It is found in the virion membrane. Envelope protein. This Vaccinia virus (strain Copenhagen) (VACV) protein is Protein OPG081 (OPG081).